The primary structure comprises 187 residues: MASTADIKNGIVINIDGQLWSVIEFQHVKPGKGGAFVRTKLKNVTTGKTVDRTYNAGAKIDITNVDRRDYQYLYQDGADFVFMDTSDYDQITIPGPIVGDAANFMLENQNVTVALHEGSPLYVELPASVVLEITYTEPGLQGDRSTGGTKPATVQTGYQIQVPLFLETGTKVRVDTRTGDYLGRVND.

It belongs to the elongation factor P family.

It is found in the cytoplasm. The protein operates within protein biosynthesis; polypeptide chain elongation. In terms of biological role, involved in peptide bond synthesis. Stimulates efficient translation and peptide-bond synthesis on native or reconstituted 70S ribosomes in vitro. Probably functions indirectly by altering the affinity of the ribosome for aminoacyl-tRNA, thus increasing their reactivity as acceptors for peptidyl transferase. The polypeptide is Elongation factor P (Leifsonia xyli subsp. xyli (strain CTCB07)).